A 550-amino-acid chain; its full sequence is Chaperonin GroEL (550 aa).

ATP contacts are provided by residues T30–P33, K51, D87–T91, G415, N481–A483, and D497.

The protein belongs to the chaperonin (HSP60) family. In terms of assembly, forms a cylinder of 14 subunits composed of two heptameric rings stacked back-to-back. Interacts with the co-chaperonin GroES.

Its subcellular location is the cytoplasm. The enzyme catalyses ATP + H2O + a folded polypeptide = ADP + phosphate + an unfolded polypeptide.. Together with its co-chaperonin GroES, plays an essential role in assisting protein folding. The GroEL-GroES system forms a nano-cage that allows encapsulation of the non-native substrate proteins and provides a physical environment optimized to promote and accelerate protein folding. This Photobacterium profundum (strain SS9) protein is Chaperonin GroEL.